The sequence spans 132 residues: Venom CUB domain-containing protein 2 (132 aa).

Positions 1 to 17 are cleaved as a signal peptide; it reads MKTLFLAIALFSAVALA. The 108-residue stretch at 22-129 folds into the CUB domain; sequence ESAELVPGGE…RGFVACKATA (108 aa). Intrachain disulfides connect Cys-66/Cys-125 and Cys-77/Cys-94.

This sequence belongs to the venom CUB family. As to expression, expressed by the venom gland (posterior main gland) (at protein level).

It localises to the secreted. This is Venom CUB domain-containing protein 2 from Platymeris rhadamanthus (Red spot assassin bug).